The chain runs to 396 residues: Putative F-box/kelch-repeat protein At3g17540 (396 aa).

Positions 4-50 (TMVISDLPHEIESEILSRVPTKSLAKLHTTCKRWYALFRDPRFVKKN) constitute an F-box domain. Kelch repeat units lie at residues 163–209 (LRYC…GMSL), 253–299 (VLSI…FLAV), and 338–386 (RIYI…KRKG).

The chain is Putative F-box/kelch-repeat protein At3g17540 from Arabidopsis thaliana (Mouse-ear cress).